A 398-amino-acid chain; its full sequence is Dual-specificity RNA methyltransferase RlmN (398 aa).

Residue glutamate 119 is the Proton acceptor of the active site. The 240-residue stretch at 125-364 (EADRATLCVS…TIVRKTRGDD (240 aa)) folds into the Radical SAM core domain. An intrachain disulfide couples cysteine 132 to cysteine 369. The [4Fe-4S] cluster site is built by cysteine 139, cysteine 143, and cysteine 146. S-adenosyl-L-methionine-binding positions include 193–194 (GE), serine 225, 247–249 (SLH), and asparagine 326. Residue cysteine 369 is the S-methylcysteine intermediate of the active site.

This sequence belongs to the radical SAM superfamily. RlmN family. Requires [4Fe-4S] cluster as cofactor.

The protein localises to the cytoplasm. It catalyses the reaction adenosine(2503) in 23S rRNA + 2 reduced [2Fe-2S]-[ferredoxin] + 2 S-adenosyl-L-methionine = 2-methyladenosine(2503) in 23S rRNA + 5'-deoxyadenosine + L-methionine + 2 oxidized [2Fe-2S]-[ferredoxin] + S-adenosyl-L-homocysteine. The enzyme catalyses adenosine(37) in tRNA + 2 reduced [2Fe-2S]-[ferredoxin] + 2 S-adenosyl-L-methionine = 2-methyladenosine(37) in tRNA + 5'-deoxyadenosine + L-methionine + 2 oxidized [2Fe-2S]-[ferredoxin] + S-adenosyl-L-homocysteine. In terms of biological role, specifically methylates position 2 of adenine 2503 in 23S rRNA and position 2 of adenine 37 in tRNAs. m2A2503 modification seems to play a crucial role in the proofreading step occurring at the peptidyl transferase center and thus would serve to optimize ribosomal fidelity. This is Dual-specificity RNA methyltransferase RlmN from Yersinia pseudotuberculosis serotype O:3 (strain YPIII).